We begin with the raw amino-acid sequence, 222 residues long: DnaJ homolog subfamily B member 9 (222 aa).

Positions 1–23 are cleaved as a signal peptide; the sequence is MATPQSVFVFAICILMITELILA. A J domain is found at 26-90; that stretch reads SYYDILGVPK…HRRKEYDTVG (65 aa). Residues 91–222 form a divergent targeting domain region; that stretch reads HTAFTNGKGQ…VTTYTDCSGQ (132 aa). A Phosphoserine modification is found at Ser-133.

Interacts with HSPA5/BiP; interaction is direct. Interacts with ERN1/IRE1 (via the luminal region). Interacts with DERL1.

The protein resides in the endoplasmic reticulum lumen. Functionally, co-chaperone for Hsp70 protein HSPA5/BiP that acts as a key repressor of the ERN1/IRE1-mediated unfolded protein response (UPR). J domain-containing co-chaperones stimulate the ATPase activity of Hsp70 proteins and are required for efficient substrate recognition by Hsp70 proteins. In the unstressed endoplasmic reticulum, interacts with the luminal region of ERN1/IRE1 and selectively recruits HSPA5/BiP: HSPA5/BiP disrupts the dimerization of the active ERN1/IRE1 luminal region, thereby inactivating ERN1/IRE1. Also involved in endoplasmic reticulum-associated degradation (ERAD) of misfolded proteins. Required for survival of B-cell progenitors and normal antibody production. The protein is DnaJ homolog subfamily B member 9 of Cricetulus griseus (Chinese hamster).